We begin with the raw amino-acid sequence, 279 residues long: Large ribosomal subunit protein uL2 (279 aa).

The tract at residues 227–279 is disordered; it reads GVAMNPVDHPMGGGEGKTSGGRHPVSPWGFPTKGKKTRDPNKLSSKFIKSKKR.

This sequence belongs to the universal ribosomal protein uL2 family. In terms of assembly, part of the 50S ribosomal subunit. Forms a bridge to the 30S subunit in the 70S ribosome.

Functionally, one of the primary rRNA binding proteins. Required for association of the 30S and 50S subunits to form the 70S ribosome, for tRNA binding and peptide bond formation. It has been suggested to have peptidyltransferase activity; this is somewhat controversial. Makes several contacts with the 16S rRNA in the 70S ribosome. This chain is Large ribosomal subunit protein uL2, found in Neorickettsia sennetsu (strain ATCC VR-367 / Miyayama) (Ehrlichia sennetsu).